We begin with the raw amino-acid sequence, 492 residues long: 3-octaprenyl-4-hydroxybenzoate carboxy-lyase (492 aa).

Asparagine 175 serves as a coordination point for Mn(2+). Residues 178–180 (IYR), 192–194 (RWL), and 197–198 (RG) each bind prenylated FMN. Mn(2+) is bound at residue glutamate 241. The Proton donor role is filled by aspartate 290.

This sequence belongs to the UbiD family. In terms of assembly, homohexamer. Requires prenylated FMN as cofactor. It depends on Mn(2+) as a cofactor.

It localises to the cell membrane. It carries out the reaction a 4-hydroxy-3-(all-trans-polyprenyl)benzoate + H(+) = a 2-(all-trans-polyprenyl)phenol + CO2. It functions in the pathway cofactor biosynthesis; ubiquinone biosynthesis. Catalyzes the decarboxylation of 3-octaprenyl-4-hydroxy benzoate to 2-octaprenylphenol, an intermediate step in ubiquinone biosynthesis. In Salmonella typhi, this protein is 3-octaprenyl-4-hydroxybenzoate carboxy-lyase.